The primary structure comprises 395 residues: Choline/ethanolamine kinase (395 aa).

Ala2 bears the N-acetylalanine mark. Residues Ser75–Leu81, Arg104, Gln146–Pro152, Gln244, and Asp264 contribute to the ATP site. Gly77–Ser79 is a phosphocholine binding site.

Belongs to the choline/ethanolamine kinase family. As to quaternary structure, homodimer, and heterodimer with CHKA.

It catalyses the reaction choline + ATP = phosphocholine + ADP + H(+). It carries out the reaction ethanolamine + ATP = phosphoethanolamine + ADP + H(+). The protein operates within phospholipid metabolism; phosphatidylethanolamine biosynthesis; phosphatidylethanolamine from ethanolamine: step 1/3. Its function is as follows. Has a key role in phospholipid metabolism, and catalyzes the first step of phosphatidylethanolamine and phosphatidylcholine biosynthesis. The chain is Choline/ethanolamine kinase (CHKB) from Homo sapiens (Human).